The sequence spans 444 residues: Type II NADH:quinone oxidoreductase (444 aa).

Residues 8-12 (GGGAG), N38, and S120 contribute to the FAD site. NAD(+) is bound by residues 186–191 (VGGGAT) and G285. FAD-binding residues include D325 and A341.

It belongs to the NADH dehydrogenase family. Requires FAD as cofactor.

It localises to the cell inner membrane. It catalyses the reaction a quinone + NADH + H(+) = a quinol + NAD(+). The catalysed reaction is a ubiquinone + NADH + H(+) = a ubiquinol + NAD(+). Its function is as follows. Alternative, nonproton pumping NADH:quinone oxidoreductase that delivers electrons to the respiratory chain by oxidation of NADH and reduction of quinones. Utilizes NADH exclusively, and electron flow from NADH to ubiquinone does not generate an electrochemical gradient. This Haemophilus influenzae (strain ATCC 51907 / DSM 11121 / KW20 / Rd) protein is Type II NADH:quinone oxidoreductase (ndh).